Here is a 425-residue protein sequence, read N- to C-terminus: Serine--tRNA ligase (425 aa).

230–232 (TAE) is an L-serine binding site. 261–263 (RSE) contacts ATP. Glu284 serves as a coordination point for L-serine. Residue 348–351 (EISS) coordinates ATP. Residue Ser384 coordinates L-serine.

This sequence belongs to the class-II aminoacyl-tRNA synthetase family. Type-1 seryl-tRNA synthetase subfamily. As to quaternary structure, homodimer. The tRNA molecule binds across the dimer.

Its subcellular location is the cytoplasm. It carries out the reaction tRNA(Ser) + L-serine + ATP = L-seryl-tRNA(Ser) + AMP + diphosphate + H(+). The catalysed reaction is tRNA(Sec) + L-serine + ATP = L-seryl-tRNA(Sec) + AMP + diphosphate + H(+). The protein operates within aminoacyl-tRNA biosynthesis; selenocysteinyl-tRNA(Sec) biosynthesis; L-seryl-tRNA(Sec) from L-serine and tRNA(Sec): step 1/1. Functionally, catalyzes the attachment of serine to tRNA(Ser). Is also able to aminoacylate tRNA(Sec) with serine, to form the misacylated tRNA L-seryl-tRNA(Sec), which will be further converted into selenocysteinyl-tRNA(Sec). This chain is Serine--tRNA ligase, found in Streptococcus agalactiae serotype Ia (strain ATCC 27591 / A909 / CDC SS700).